The sequence spans 740 residues: F-BAR and double SH3 domains protein 2 (740 aa).

One can recognise an F-BAR domain in the interval 8–282; sequence VKVTQELRNI…NSSKVVRDYN (275 aa). The interval 303–323 is disordered; it reads PCDSDTSRQLESETGTTEEHS. The span at 307–323 shows a compositional bias: basic and acidic residues; that stretch reads DTSRQLESETGTTEEHS. Residues 356-397 adopt a coiled-coil conformation; it reads GVALSEQSRAELEQKIDEARESIRKAEIIKLKAEARLDLLKQ. SH3 domains lie at 469–530 and 567–629; these read NYPL…FPTS and ASVC…ELSA. Positions 567-629 are required and sufficient for location at clathrin-coated pits; sequence ASVCFVKALY…PSVLVEELSA (63 aa). Positions 629 to 645 are enriched in polar residues; the sequence is ASENGDTPWTREIQISP. Positions 629–740 are disordered; it reads ASENGDTPWT…KMEDVEITLV (112 aa). A compositionally biased stretch (pro residues) spans 646–657; that stretch reads SPKPHTSLPPLP. Phosphoserine is present on residues S675 and S681. Over residues 675 to 706 the composition is skewed to polar residues; the sequence is SQFFPRSPSANENSLHAESPGFSQASRQTPDT.

Homodimer. Interacts (via SH3 domain 2) with ITSN1 (via SH3 domain 4). Recruited to clathrin-coated pits during a mid-to-late stage of assembly via interaction with ITSN1. Interacts (via SH3 domain 1) with WASL. Interacts with WAS. Interacts with CASK and MAGI1. CASK inhibits interaction with MAGI1. In terms of processing, phosphorylated. Phosphorylation on a Ser residue is important for recruitment to the cell membrane and for its role in promoting endocytosis. As to expression, detected in inner ear vestibula and in stereocilia in cochlear hair cell bundles (at protein level). Ubiquitous. Detected in testis, liver, brain cortex, cerebellum, kidney, organ of Corti, utricle, spiral ganglion, tongue and eye.

The protein resides in the cytoplasm. Its subcellular location is the cell junction. The protein localises to the membrane. It localises to the clathrin-coated pit. It is found in the cell membrane. The protein resides in the cell projection. Its subcellular location is the stereocilium. In terms of biological role, adapter protein that plays a role in endocytosis via clathrin-coated pits. Contributes to the internalization of cell surface receptors, such as integrin ITGB1 and transferrin receptor. Promotes endocytosis of EGFR in cancer cells, and thereby contributes to the down-regulation of EGFR signaling. Recruited to clathrin-coated pits during a mid-to-late stage of assembly, where it is required for normal progress from U-shaped intermediate stage pits to terminal, omega-shaped pits. Binds to membranes enriched in phosphatidylinositol 3,4-bisphosphate or phosphatidylinositol 3,4,5-trisphosphate. When bound to membranes, promotes actin polymerization via its interaction with WAS and/or WASL which leads to the activation of the Arp2/3 complex. Does not promote actin polymerisation in the absence of membranes. This is F-BAR and double SH3 domains protein 2 (Fchsd2) from Mus musculus (Mouse).